An 871-amino-acid chain; its full sequence is Leucine--tRNA ligase (871 aa).

The short motif at 43-53 is the 'HIGH' region element; it reads PYPSGRIHIGH. Residues 629–633 carry the 'KMSKS' region motif; it reads KMSKS. Lysine 632 contacts ATP.

It belongs to the class-I aminoacyl-tRNA synthetase family.

Its subcellular location is the cytoplasm. The catalysed reaction is tRNA(Leu) + L-leucine + ATP = L-leucyl-tRNA(Leu) + AMP + diphosphate. This is Leucine--tRNA ligase from Chelativorans sp. (strain BNC1).